Consider the following 357-residue polypeptide: Large ribosomal subunit protein mL45 (357 aa).

The disordered stretch occupies residues 333 to 357 (EAKALPLRTTEKLEEAKKEKEQQEI). Residues 341–357 (TTEKLEEAKKEKEQQEI) are compositionally biased toward basic and acidic residues.

This sequence belongs to the mitochondrion-specific ribosomal protein mL45 family.

Its subcellular location is the mitochondrion. The sequence is that of Large ribosomal subunit protein mL45 (mrpl-45) from Caenorhabditis elegans.